An 843-amino-acid chain; its full sequence is Neuroligin-1 (843 aa).

The first 45 residues, 1 to 45 (MALPRCMWPNYVWRAMMACVVHRGSGAPLTLCLLGCLLQTFHVLS), serve as a signal peptide directing secretion. The Extracellular segment spans residues 46 to 697 (QKLDDVDPLV…DQRDYSTELS (652 aa)). An N-linked (GlcNAc...) (complex) asparagine glycan is attached at N109. The cysteines at positions 117 and 153 are disulfide-linked. Residues 167 to 190 (LTKKHTDDLGDNDGAEDEDIRDSG) form a disordered region. The span at 175–186 (LGDNDGAEDEDI) shows a compositional bias: acidic residues. Residues N303 and N343 are each glycosylated (N-linked (GlcNAc...) (complex) asparagine). Intrachain disulfides connect C342/C353 and C512/C546. The N-linked (GlcNAc...) asparagine glycan is linked to N547. The interval 647–688 (TKVPSTDITLRPTRKNSTPVTSAFPTAKQDDPKQQPSPFSVD) is disordered. Residues 661-670 (KNSTPVTSAF) show a composition bias toward polar residues. Residues S683 and S686 are each glycosylated (O-linked (GalNAc...) serine). The chain crosses the membrane as a helical span at residues 698–718 (VTIAVGASLLFLNILAFAALY). Topologically, residues 719-843 (YKKDKRRHDV…HPHSHSTTRV (125 aa)) are cytoplasmic. The interval 822-843 (GGQNNTLPHPHPHPHSHSTTRV) is disordered. Residues 831–843 (PHPHPHSHSTTRV) are compositionally biased toward basic residues.

It belongs to the type-B carboxylesterase/lipase family. As to quaternary structure, interacts with neurexins NRXN1, NRXN2 and NRXN3. Interaction with neurexins is mediated by heparan sulfate glycan modification on neurexin. Interacts (via its C-terminus) with DLG4/PSD-95 (via PDZ domain 3). Interacts with AIP1, GOPC and PDZRN3. Interacts with NLGN3. In terms of tissue distribution, brain and arteries (at protein level). Expressed in olfactory bulb. Detected in brain.

The protein resides in the cell membrane. The protein localises to the postsynaptic density. Its subcellular location is the synaptic cleft. It is found in the synaptic cell membrane. Cell surface protein involved in cell-cell-interactions via its interactions with neurexin family members. Plays a role in synapse function and synaptic signal transmission, and probably mediates its effects by recruiting and clustering other synaptic proteins. May promote the initial formation of synapses, but is not essential for this. In vitro, triggers the de novo formation of presynaptic structures. May be involved in specification of excitatory synapses. Required to maintain wakefulness quality and normal synchrony of cerebral cortex activity during wakefulness and sleep. The protein is involved in nervous system development. This Mus musculus (Mouse) protein is Neuroligin-1 (Nlgn1).